We begin with the raw amino-acid sequence, 473 residues long: Ribulose bisphosphate carboxylase large chain (473 aa).

2 residues coordinate substrate: N116 and T166. Catalysis depends on K168, which acts as the Proton acceptor. K170 provides a ligand contact to substrate. Mg(2+) is bound by residues K194, D196, and E197. Position 194 is an N6-carboxylysine (K194). Residue H287 is the Proton acceptor of the active site. Substrate-binding residues include R288, H320, and S372.

The protein belongs to the RuBisCO large chain family. Type I subfamily. As to quaternary structure, heterohexadecamer of 8 large chains and 8 small chains. Mg(2+) is required as a cofactor.

The catalysed reaction is 2 (2R)-3-phosphoglycerate + 2 H(+) = D-ribulose 1,5-bisphosphate + CO2 + H2O. It carries out the reaction D-ribulose 1,5-bisphosphate + O2 = 2-phosphoglycolate + (2R)-3-phosphoglycerate + 2 H(+). Its function is as follows. RuBisCO catalyzes two reactions: the carboxylation of D-ribulose 1,5-bisphosphate, the primary event in carbon dioxide fixation, as well as the oxidative fragmentation of the pentose substrate. Both reactions occur simultaneously and in competition at the same active site. The polypeptide is Ribulose bisphosphate carboxylase large chain (Nitrosomonas sp. (strain ENI-11)).